Reading from the N-terminus, the 437-residue chain is Adenosylmethionine-8-amino-7-oxononanoate aminotransferase (437 aa).

Residue Trp-64 participates in substrate binding. 124 to 125 (GS) serves as a coordination point for pyridoxal 5'-phosphate. A substrate-binding site is contributed by Tyr-157. Position 254 (Asp-254) interacts with pyridoxal 5'-phosphate. Substrate contacts are provided by Lys-283 and Gly-316. At Lys-283 the chain carries N6-(pyridoxal phosphate)lysine. Residue 317 to 318 (PT) coordinates pyridoxal 5'-phosphate. Substrate is bound at residue Arg-400.

This sequence belongs to the class-III pyridoxal-phosphate-dependent aminotransferase family. BioA subfamily. Homodimer. Requires pyridoxal 5'-phosphate as cofactor.

Its subcellular location is the cytoplasm. It carries out the reaction (8S)-8-amino-7-oxononanoate + S-adenosyl-L-methionine = S-adenosyl-4-methylsulfanyl-2-oxobutanoate + (7R,8S)-7,8-diammoniononanoate. It functions in the pathway cofactor biosynthesis; biotin biosynthesis; 7,8-diaminononanoate from 8-amino-7-oxononanoate (SAM route): step 1/1. Catalyzes the transfer of the alpha-amino group from S-adenosyl-L-methionine (SAM) to 7-keto-8-aminopelargonic acid (KAPA) to form 7,8-diaminopelargonic acid (DAPA). It is the only aminotransferase known to utilize SAM as an amino donor. The protein is Adenosylmethionine-8-amino-7-oxononanoate aminotransferase (bioA) of Mycobacterium tuberculosis (strain CDC 1551 / Oshkosh).